The primary structure comprises 81 residues: Defensin-like protein 311 (81 aa).

The signal sequence occupies residues 1–24 (MEKISAFFVILFLVSSCLVTMSVG). 3 disulfide bridges follow: Cys27–Cys50, Cys33–Cys57, and Cys41–Cys59.

Belongs to the DEFL family.

It is found in the secreted. The protein is Defensin-like protein 311 of Arabidopsis thaliana (Mouse-ear cress).